Here is a 282-residue protein sequence, read N- to C-terminus: 1D-myo-inositol 2-acetamido-2-deoxy-alpha-D-glucopyranoside deacetylase (282 aa).

Zn(2+)-binding residues include His-6, Asp-9, and His-141.

This sequence belongs to the MshB deacetylase family. The cofactor is Zn(2+).

It catalyses the reaction 1D-myo-inositol 2-acetamido-2-deoxy-alpha-D-glucopyranoside + H2O = 1D-myo-inositol 2-amino-2-deoxy-alpha-D-glucopyranoside + acetate. Catalyzes the deacetylation of 1D-myo-inositol 2-acetamido-2-deoxy-alpha-D-glucopyranoside (GlcNAc-Ins) in the mycothiol biosynthesis pathway. This chain is 1D-myo-inositol 2-acetamido-2-deoxy-alpha-D-glucopyranoside deacetylase, found in Nocardiopsis dassonvillei (strain ATCC 23218 / DSM 43111 / CIP 107115 / JCM 7437 / KCTC 9190 / NBRC 14626 / NCTC 10488 / NRRL B-5397 / IMRU 509) (Actinomadura dassonvillei).